A 72-amino-acid polypeptide reads, in one-letter code: Caerin-regulated peptide (72 aa).

The signal sequence occupies residues 1 to 22; it reads MAFLKKSLLLVLFLGLVSLSIC. A propeptide spanning residues 23 to 43 is cleaved from the precursor; it reads DEEKRENEDEEEQEDDEQSEE. The tract at residues 24-46 is disordered; the sequence is EEKRENEDEEEQEDDEQSEEKRG. Residues 30–41 show a composition bias toward acidic residues; sequence EDEEEQEDDEQS.

Expressed by the skin glands.

It is found in the secreted. Its function is as follows. Has antibacterial activity against Gram-positive bacterium M.luteus NCT C2665 and against Gram-negative bacterium E.coli K12D31. The chain is Caerin-regulated peptide from Agalychnis callidryas (Red-eyed tree frog).